We begin with the raw amino-acid sequence, 161 residues long: MSVTLHTDVGDIKIEVFCERTPKTCENFLALCASNYYNGCVFHRNIKGFMVQTGDPTGTGRGGSSIWGKKFEDEYSEYLKHNVRGVVSMANNGPNTNGSQFFITYGKQPHLDMKYTVFGKVIDGLETLDELEKLPVNEKTYRPLNDVHIKDITIHANPFAQ.

The residue at position 2 (S2) is an N-acetylserine. Residues 2 to 154 form the PPIase cyclophilin-type domain; the sequence is SVTLHTDVGD…NDVHIKDITI (153 aa). Residue R61 is modified to Omega-N-methylarginine.

The protein belongs to the cyclophilin-type PPIase family. PPIL3 subfamily. Identified in the spliceosome C complex.

The catalysed reaction is [protein]-peptidylproline (omega=180) = [protein]-peptidylproline (omega=0). Functionally, PPIases accelerate the folding of proteins. It catalyzes the cis-trans isomerization of proline imidic peptide bonds in oligopeptides. May be involved in pre-mRNA splicing. The chain is Peptidyl-prolyl cis-trans isomerase-like 3 (Ppil3) from Rattus norvegicus (Rat).